Consider the following 238-residue polypeptide: Metal-independent phosphoserine phosphatase (238 aa).

Residue H32 is the Tele-phosphohistidine intermediate of the active site. E107 serves as the catalytic Proton donor/acceptor.

The protein belongs to the phosphoglycerate mutase family.

The enzyme catalyses O-phospho-L-serine + H2O = L-serine + phosphate. It catalyses the reaction O-phospho-D-serine + H2O = D-serine + phosphate. Phosphoglycerate mutase-like protein lacking PGM activity, but having a low metal-independent phosphoserine phosphatase activity in vitro. May be involved in serine biosynthesis. This is Metal-independent phosphoserine phosphatase (IPSP) from Arabidopsis thaliana (Mouse-ear cress).